We begin with the raw amino-acid sequence, 188 residues long: Dual specificity protein phosphatase 18 (188 aa).

Residues 19 to 160 (GLSQITSSLY…LIHYEFQLFG (142 aa)) enclose the Tyrosine-protein phosphatase domain. The segment at 95–141 (MKQGRTLLHCAAGVSRSAALCLAYLMKYHAMSLLDAHTWTKSCRPII) is sufficient for mitochondrial localization. Cys104 (phosphocysteine intermediate) is an active-site residue.

It belongs to the protein-tyrosine phosphatase family. Non-receptor class dual specificity subfamily.

It localises to the cytoplasm. The protein localises to the nucleus. The protein resides in the mitochondrion inner membrane. The enzyme catalyses O-phospho-L-tyrosyl-[protein] + H2O = L-tyrosyl-[protein] + phosphate. It carries out the reaction O-phospho-L-seryl-[protein] + H2O = L-seryl-[protein] + phosphate. It catalyses the reaction O-phospho-L-threonyl-[protein] + H2O = L-threonyl-[protein] + phosphate. Its function is as follows. Can dephosphorylate single and diphosphorylated synthetic MAPK peptides, with preference for the phosphotyrosine and diphosphorylated forms over phosphothreonine. In vitro, dephosphorylates p-nitrophenyl phosphate (pNPP). The protein is Dual specificity protein phosphatase 18 (DUSP18) of Bos taurus (Bovine).